A 215-amino-acid chain; its full sequence is AN1-type zinc finger protein C1271.05c (215 aa).

The segment covering 116–128 has biased composition (polar residues); it reads IPSISKSNLTNPP. Residues 116–138 form a disordered region; it reads IPSISKSNLTNPPLESEKSSDKA. The AN1-type zinc finger occupies 144–193; it reads ATSRRRCCHPTCTRITLRLAGNCLHCNGRFCAAHRLMEDHDCVALFSLRK. 8 residues coordinate Zn(2+): Cys-150, Cys-155, Cys-166, Cys-169, Cys-174, His-177, His-183, and Cys-185.

The protein localises to the cytoplasm. It localises to the nucleus. In Schizosaccharomyces pombe (strain 972 / ATCC 24843) (Fission yeast), this protein is AN1-type zinc finger protein C1271.05c.